The primary structure comprises 559 residues: Potassium-transporting ATPase potassium-binding subunit (559 aa).

13 helical membrane passes run 5–25, 27–47, 63–83, 132–152, 170–190, 253–273, 283–303, 327–347, 356–376, 379–399, 416–436, 484–504, and 524–544; these read GFLL…PLGS, LARL…RILW, LLAL…LLFW, GLTV…FALI, LVRI…LFFI, LAQM…FGEA, LLWA…WAEV, FGVL…CGAV, ALGG…FGGV, GLYG…LMIG, MTAL…ALAM, LLAF…MAIA, and GALF…LTFI.

This sequence belongs to the KdpA family. As to quaternary structure, the system is composed of three essential subunits: KdpA, KdpB and KdpC.

It localises to the cell inner membrane. In terms of biological role, part of the high-affinity ATP-driven potassium transport (or Kdp) system, which catalyzes the hydrolysis of ATP coupled with the electrogenic transport of potassium into the cytoplasm. This subunit binds the periplasmic potassium ions and delivers the ions to the membrane domain of KdpB through an intramembrane tunnel. The polypeptide is Potassium-transporting ATPase potassium-binding subunit (Salmonella heidelberg (strain SL476)).